The sequence spans 224 residues: Small ribosomal subunit protein uS3 (224 aa).

One can recognise a KH type-2 domain in the interval 38-106 (IRKFISEKLK…QVHINIVEIK (69 aa)).

It belongs to the universal ribosomal protein uS3 family. As to quaternary structure, part of the 30S ribosomal subunit. Forms a tight complex with proteins S10 and S14.

In terms of biological role, binds the lower part of the 30S subunit head. Binds mRNA in the 70S ribosome, positioning it for translation. The sequence is that of Small ribosomal subunit protein uS3 from Lactobacillus acidophilus (strain ATCC 700396 / NCK56 / N2 / NCFM).